We begin with the raw amino-acid sequence, 110 residues long: Large ribosomal subunit protein uL22 (110 aa).

This sequence belongs to the universal ribosomal protein uL22 family. Part of the 50S ribosomal subunit.

Functionally, this protein binds specifically to 23S rRNA; its binding is stimulated by other ribosomal proteins, e.g. L4, L17, and L20. It is important during the early stages of 50S assembly. It makes multiple contacts with different domains of the 23S rRNA in the assembled 50S subunit and ribosome. Its function is as follows. The globular domain of the protein is located near the polypeptide exit tunnel on the outside of the subunit, while an extended beta-hairpin is found that lines the wall of the exit tunnel in the center of the 70S ribosome. This is Large ribosomal subunit protein uL22 from Acinetobacter baylyi (strain ATCC 33305 / BD413 / ADP1).